Reading from the N-terminus, the 317-residue chain is Heme A synthase (317 aa).

The Cytoplasmic segment spans residues 1–6 (MQRSLK). A helical transmembrane segment spans residues 7 to 27 (WFASTTTVAMLFVLIGGALVT). At 28 to 54 (KTDSGMGCGRSWPLCHGQWIPDDITPQ) the chain is on the extracellular side. A disulfide bridge connects residues cysteine 35 and cysteine 42. Residues 55–75 (LVIELSHRLVSGLAAIMVLIL) traverse the membrane as a helical segment. The active site involves glutamate 58. Position 61 (histidine 61) interacts with heme o. The Cytoplasmic segment spans residues 76 to 91 (CIRSWRVMGHVRETKP). The helical transmembrane segment at 92–112 (LAVLSFVFLVLQSLIGAAAVV) threads the bilayer. Residues 113-123 (WGQSDFVMALH) are Extracellular-facing. Heme o is bound at residue histidine 123. Residues 124–144 (FGISLISFAAVLLLTLLIFVV) traverse the membrane as a helical segment. The Cytoplasmic segment spans residues 145-159 (DKKFSPTSLQLDGQM). The chain crosses the membrane as a helical span at residues 160 to 180 (RFHIYGIIIYSYLVVYTGALV). Topologically, residues 181 to 214 (RHTNASLACPSWPLCAKSRLLPVQFHEWVQMGHR) are extracellular. A disulfide bridge links cysteine 189 with cysteine 195. Histidine 213 lines the heme b pocket. The helical transmembrane segment at 215-235 (LAAAVIIIWIAVATVHAARYY) threads the bilayer. The Cytoplasmic segment spans residues 236-243 (REQPVIYY). Residues 244–264 (GWIISLLLVLAQMVTGALVVF) form a helical membrane-spanning segment. Residues 265–272 (TELNLYIS) are Extracellular-facing. Residues 273–293 (LAHAFFISCLFGVLSYLLLLA) traverse the membrane as a helical segment. Histidine 275 contributes to the heme b binding site. At 294–317 (LRTRRRPATAAGRSVEDTASAPLK) the chain is on the cytoplasmic side.

The protein belongs to the COX15/CtaA family. Type 1 subfamily. In terms of assembly, interacts with CtaB. It depends on heme b as a cofactor.

It localises to the cell membrane. It carries out the reaction Fe(II)-heme o + 2 A + H2O = Fe(II)-heme a + 2 AH2. It participates in porphyrin-containing compound metabolism; heme A biosynthesis; heme A from heme O: step 1/1. Its function is as follows. Catalyzes the conversion of heme O to heme A by two successive hydroxylations of the methyl group at C8. The first hydroxylation forms heme I, the second hydroxylation results in an unstable dihydroxymethyl group, which spontaneously dehydrates, resulting in the formyl group of heme A. This is Heme A synthase from Geobacillus thermodenitrificans.